The chain runs to 1242 residues: Structural polyprotein (1242 aa).

The segment at 1–36 (MFPYPTLNYSPMAPVNPMAYRDPNPPRRRWRPFRPP) is necessary for nucleocapsid assembly and virus assembly. A disordered region spans residues 1 to 104 (MFPYPTLNYS…KQKPGKRQRM (104 aa)). A host transcription inhibition region spans residues 37-70 (LAAQIEDLRRSIANLTFKQRAPNPPAGPPAKRKK). The Supraphysiological nuclear export signal motif lies at 44 to 51 (LRRSIANL). Residues 66 to 104 (AKRKKPAPKPKPAAPKKKRQPPPAKKQKRKQKPGKRQRM) are compositionally biased toward basic residues. Positions 67-70 (KRKK) match the Nuclear localization signal motif. The segment at 83–113 (KRQPPPAKKQKRKQKPGKRQRMCMKLESDKT) is binding to the viral RNA. Positions 98–112 (PGKRQRMCMKLESDK) are ribosome-binding. Ser110 carries the post-translational modification Phosphoserine. Positions 112-261 (KTFPILLNGQ…KDTPEGSEPW (150 aa)) constitute a Peptidase S3 domain. The residue at position 113 (Thr113) is a Phosphothreonine. Catalysis depends on charge relay system residues His138, Asp160, and Ser212. The segment at 262-273 (SLTTVMCVLANI) is functions as an uncleaved signal peptide for the precursor of protein E3/E2. The N-linked (GlcNAc...) asparagine; by host glycan is linked to Asn272. The Extracellular portion of the chain corresponds to 325–688 (DLETHFTQYK…YYYNRYPMTT (364 aa)). A helical transmembrane segment spans residues 689 to 709 (IVGLCTCAAIIMVSCITSVWL). Topologically, residues 710–744 (LCRTRNLCITPYRLAPNAQVPILLAVLCCVKPTRA) are cytoplasmic. S-palmitoyl cysteine; by host attachment occurs at residues Cys717, Cys737, and Cys738. The interval 717 to 737 (CITPYRLAPNAQVPILLAVLC) is transient transmembrane before p62-6K protein processing. Over 745 to 759 (DDTLQVLNYLWNNNQ) the chain is Extracellular. The next 2 helical transmembrane spans lie at 760–780 (NFFWMQTLIPLAALIVCMRML) and 781–801 (RCLLCCGPAFLLVCGALGAAA). Residues 802-1218 (YEHTAVMPNK…WSWLKVLVGS (417 aa)) lie on the Extracellular side of the membrane. Disulfide bonds link Cys850-Cys915, Cys863-Cys895, Cys864-Cys897, Cys869-Cys879, Cys1061-Cys1073, Cys1103-Cys1178, Cys1108-Cys1182, and Cys1130-Cys1172. The tract at residues 885-902 (VYPFMWGGAYCFCDTENT) is E1 fusion peptide loop. A helical membrane pass occupies residues 1219–1239 (TSAFIVLGLIATAVVALVLFT). The Cytoplasmic portion of the chain corresponds to 1240–1242 (HKH).

In terms of assembly, part of a tetrameric complex composed of host CRM1, host importin alpha/beta dimer and the viral capsid; this complex blocks the receptor-mediated transport through the nuclear pore. Interacts with host phosphatase PPP1CA; this interaction dephosphorylates the capsid protein, which increases its ability to bind to the viral genome. Interacts with host karyopherin KPNA4; this interaction allows the nuclear import of the viral capsid protein. Interacts with spike glycoprotein E2. Interacts with host IRAK1; the interaction leads to inhibition of IRAK1-dependent signaling. As to quaternary structure, the precursor of protein E3/E2 and E1 form a heterodimer shortly after synthesis. The precursor of protein E3/E2 and E1 form a heterodimer shortly after synthesis. Processing of the precursor of protein E3/E2 into E2 and E3 results in a heterodimer of the spike glycoproteins E2 and E1. Spike at virion surface are constituted of three E2-E1 heterodimers. After target cell attachment and endocytosis, E1 change conformation to form homotrimers. Interacts with 6K protein. In terms of assembly, processing of the precursor of protein E3/E2 into E2 and E3 results in a heterodimer of the spike glycoproteins E2 and E1. Spike at virion surface are constituted of three E2-E1 heterodimers. Interacts with 6K protein. As to quaternary structure, interacts with spike glycoprotein E1. Interacts with spike glycoprotein E2. Structural polyprotein: Specific enzymatic cleavages in vivo yield mature proteins. Capsid protein is auto-cleaved during polyprotein translation, unmasking a signal peptide at the N-terminus of the precursor of E3/E2. The remaining polyprotein is then targeted to the host endoplasmic reticulum, where host signal peptidase cleaves it into pE2, 6K and E1 proteins. pE2 is further processed to mature E3 and E2 by host furin in trans-Golgi vesicle. Post-translationally, phosphorylated on serine and threonine residues. In terms of processing, palmitoylated via thioester bonds. These palmitoylations may induce disruption of the C-terminus transmembrane. This would result in the reorientation of E2 C-terminus from lumenal to cytoplasmic side. N-glycosylated. Post-translationally, palmitoylated via thioester bonds.

Its subcellular location is the virion. It localises to the host cytoplasm. The protein localises to the host cell membrane. The protein resides in the host nucleus. It is found in the virion membrane. It catalyses the reaction Autocatalytic release of the core protein from the N-terminus of the togavirus structural polyprotein by hydrolysis of a -Trp-|-Ser- bond.. Its function is as follows. Forms an icosahedral capsid with a T=4 symmetry composed of 240 copies of the capsid protein surrounded by a lipid membrane through which penetrate 80 spikes composed of trimers of E1-E2 heterodimers. The capsid protein binds to the viral RNA genome at a site adjacent to a ribosome binding site for viral genome translation following genome release. Possesses a protease activity that results in its autocatalytic cleavage from the nascent structural protein. Following its self-cleavage, the capsid protein transiently associates with ribosomes, and within several minutes the protein binds to viral RNA and rapidly assembles into icosahedric core particles. The resulting nucleocapsid eventually associates with the cytoplasmic domain of the spike glycoprotein E2 at the cell membrane, leading to budding and formation of mature virions. In case of infection, new virions attach to target cells and after clathrin-mediated endocytosis their membrane fuses with the host endosomal membrane. This leads to the release of the nucleocapsid into the cytoplasm, followed by an uncoating event necessary for the genomic RNA to become accessible. The uncoating might be triggered by the interaction of capsid proteins with ribosomes. Binding of ribosomes would release the genomic RNA since the same region is genomic RNA-binding and ribosome-binding. Specifically inhibits interleukin-1 receptor-associated kinase 1/IRAK1-dependent signaling during viral entry, representing a means by which the alphaviruses may evade innate immune detection and activation prior to viral gene expression. Inhibits host transcription. Forms a tetrameric complex with XPO1/CRM1 and the nuclear import receptor importin. This complex blocks the central channel of host nuclear pores thereby inhibiting the receptor-mediated nuclear transport and thus the host mRNA and rRNA transcription. The inhibition of transcription is linked to a cytopathic effect on the host cell. Provides the signal sequence for the translocation of the precursor of protein E3/E2 to the host endoplasmic reticulum. Furin-cleaved E3 remains associated with spike glycoprotein E1 and mediates pH protection of the latter during the transport via the secretory pathway. After virion release from the host cell, the assembly protein E3 is gradually released in the extracellular space. In terms of biological role, plays a role in viral attachment to target host cell, by binding to the cell receptor. Synthesized as a p62 precursor which is processed by furin at the cell membrane just before virion budding, giving rise to E2-E1 heterodimer. The p62-E1 heterodimer is stable, whereas E2-E1 is unstable and dissociate at low pH. p62 is processed at the last step, presumably to avoid E1 fusion activation before its final export to cell surface. E2 C-terminus contains a transitory transmembrane that would be disrupted by palmitoylation, resulting in reorientation of the C-terminal tail from lumenal to cytoplasmic side. This step is critical since E2 C-terminus is involved in budding by interacting with capsid proteins. This release of E2 C-terminus in cytoplasm occurs lately in protein export, and precludes premature assembly of particles at the endoplasmic reticulum membrane. Functionally, constitutive membrane protein involved in virus glycoprotein processing, cell permeabilization, and the budding of viral particles. Disrupts the calcium homeostasis of the cell, probably at the endoplasmic reticulum level. This leads to cytoplasmic calcium elevation. Because of its lipophilic properties, the 6K protein is postulated to influence the selection of lipids that interact with the transmembrane domains of the glycoproteins, which, in turn, affects the deformability of the bilayer required for the extreme curvature that occurs as budding proceeds. Present in low amount in virions, about 3% compared to viral glycoproteins. Its function is as follows. Class II viral fusion protein. Fusion activity is inactive as long as E1 is bound to E2 in mature virion. After virus attachment to target cell and endocytosis, acidification of the endosome would induce dissociation of E1/E2 heterodimer and concomitant trimerization of the E1 subunits. This E1 trimer is fusion active, and promotes release of viral nucleocapsid in cytoplasm after endosome and viral membrane fusion. Efficient fusion requires the presence of cholesterol and sphingolipid in the target membrane. Fusion is optimal at levels of about 1 molecule of cholesterol per 2 molecules of phospholipids, and is specific for sterols containing a 3-beta-hydroxyl group. This chain is Structural polyprotein, found in Aedes (Human).